Consider the following 122-residue polypeptide: Large ribosomal subunit protein uL14 (122 aa).

Belongs to the universal ribosomal protein uL14 family. In terms of assembly, part of the 50S ribosomal subunit. Forms a cluster with proteins L3 and L19. In the 70S ribosome, L14 and L19 interact and together make contacts with the 16S rRNA in bridges B5 and B8.

In terms of biological role, binds to 23S rRNA. Forms part of two intersubunit bridges in the 70S ribosome. The protein is Large ribosomal subunit protein uL14 of Corynebacterium efficiens (strain DSM 44549 / YS-314 / AJ 12310 / JCM 11189 / NBRC 100395).